Here is a 496-residue protein sequence, read N- to C-terminus: Acyltransferase M4 (496 aa).

Residue histidine 163 is the Proton acceptor of the active site.

Belongs to the plant acyltransferase family. As to quaternary structure, monomer.

The protein operates within secondary metabolite biosynthesis. Functionally, acyltransferase; part of the gene cluster that mediates the biosynthesis of squalestatin S1 (SQS1, also known as zaragozic acid A), a heavily oxidized fungal polyketide that offers potent cholesterol lowering activity by targeting squalene synthase (SS). SQS1 is composed of a 2,8-dioxobicyclic[3.2.1]octane-3,4,5-tricarboxyclic acid core that is connected to two lipophilic polyketide arms. These initial steps feature the priming of an unusual benzoic acid starter unit onto the highly reducing polyketide synthase pks2, followed by oxaloacetate extension and product release to generate a tricarboxylic acid containing product. The phenylalanine ammonia lyase (PAL) M7 and the acyl-CoA ligase M9 are involved in transforming phenylalanine into benzoyl-CoA. The citrate synthase-like protein R3 is involved in connecting the C-alpha-carbons of the hexaketide chain and oxaloacetate to afford the tricarboxylic acid unit. The potential hydrolytic enzymes, M8 and M10, are in close proximity to pks2 and may participate in product release. On the other side, the tetraketide arm is synthesized by a the squalestatin tetraketide synthase pks1 and enzymatically esterified to the core in the last biosynthetic step, by the acetyltransferase M4. The biosynthesis of the tetraketide must involve 3 rounds of chain extension. After the first and second rounds methyl-transfer occurs, and in all rounds of extension the ketoreductase and dehydratase are active. The enoyl reductase and C-MeT of pks1 are not active in the final round of extension. The acetyltransferase M4 appears to have a broad substrate selectivity for its acyl CoA substrate, allowing the in vitro synthesis of novel squalestatins. The biosynthesis of SQS1 requires several oxidative steps likely performed by oxidoreductases M1, R1 and R2. Finally, in support of the identification of the cluster as being responsible for SQS1 production, the cluster contains a gene encoding a putative squalene synthase (SS) R6, suggesting a likely mechanism for self-resistance. The polypeptide is Acyltransferase M4 (Phoma sp. (strain ATCC 20986 / MF5453)).